The chain runs to 493 residues: Chitinase 1 (493 aa).

Residues Met-1–Ala-20 form the signal peptide. The GH18 domain maps to Val-27–Ala-318. Glu-164 functions as the Proton donor in the catalytic mechanism.

The protein belongs to the glycosyl hydrolase 18 family. Chitinase class III subfamily.

It carries out the reaction Random endo-hydrolysis of N-acetyl-beta-D-glucosaminide (1-&gt;4)-beta-linkages in chitin and chitodextrins.. The protein is Chitinase 1 (CHI1) of Rhizopus niveus.